The following is a 33-amino-acid chain: Cytochrome b6-f complex subunit 7 (33 aa).

Residues 9–29 traverse the membrane as a helical segment; sequence AVICFTLTLIGLSLGFVLLKI.

This sequence belongs to the PetM family. As to quaternary structure, the 4 large subunits of the cytochrome b6-f complex are cytochrome b6, subunit IV (17 kDa polypeptide, PetD), cytochrome f and the Rieske protein, while the 4 small subunits are PetG, PetL, PetM and PetN. The complex functions as a dimer.

The protein localises to the plastid. It is found in the cyanelle thylakoid membrane. Functionally, component of the cytochrome b6-f complex, which mediates electron transfer between photosystem II (PSII) and photosystem I (PSI), cyclic electron flow around PSI, and state transitions. This is Cytochrome b6-f complex subunit 7 from Cyanophora paradoxa.